We begin with the raw amino-acid sequence, 1292 residues long: (E3-independent) E2 ubiquitin-conjugating enzyme (1292 aa).

Pro residues predominate over residues 1-37 (MADPAAPTPAAPAPAQAPAPAPEAVPAPAAAPVPAPA). 2 disordered regions span residues 1-56 (MADP…EAGS) and 85-114 (EDSD…EGRA). The span at 38-56 (PASDSASGPSSDSGPEAGS) shows a compositional bias: low complexity. Residues S50, S87, S89, S399, and S401 each carry the phosphoserine modification. Disordered regions lie at residues 401-459 (SPDT…AGEQ), 472-519 (RLHS…IPLS), and 714-746 (IEES…TDNG). Basic and acidic residues predominate over residues 406–427 (CSRDHSMEDPDKKGESKTKSEA). S441 bears the Phosphoserine mark. A compositionally biased stretch (acidic residues) spans 478–490 (QDADDEAADDTDD). 2 positions are modified to phosphothreonine: T488 and T491. A compositionally biased stretch (low complexity) spans 491–510 (TSSVTSSASSTTSSQSGSGT). The short motif at 512–536 (RKKSIPLSIKNLKRKHKRKKNKITR) is the Nuclear localization signal element. The residue at position 515 (S515) is a Phosphoserine. The span at 732 to 742 (DEWEDDSDSWE) shows a compositional bias: acidic residues. Residues 812–882 (RELKEAIKIL…IVEEEKMEAV (71 aa)) are a coiled coil. S836 bears the Phosphoserine mark. Phosphothreonine is present on T838. S839 bears the Phosphoserine mark. Residues 882-893 (VPDVERKEDKPE) are compositionally biased toward basic and acidic residues. Residues 882-903 (VPDVERKEDKPEGQSPVKAEWP) are disordered. Phosphoserine is present on S896. Residues 953 to 1113 (KFFSTVRKEM…ALIRVVQSMT (161 aa)) enclose the UBC core domain. C1040 functions as the Glycyl thioester intermediate in the catalytic mechanism. The disordered stretch occupies residues 1160–1248 (NGVPKASSSP…KSYRSFLPEK (89 aa)).

The protein belongs to the ubiquitin-conjugating enzyme family. As to quaternary structure, interacts with CPNE1 (via VWFA domain) and CPNE4 (via VWFA domain). Interacts with UBR2. In terms of processing, phosphorylated. Phosphorylation affects subcellular location. Ubiquitinated: autoubiquitinates, possibly affecting its subcellular location. In terms of tissue distribution, predominantly expressed in skeletal muscle and heart.

It is found in the cytoplasm. It localises to the nucleus. It carries out the reaction S-ubiquitinyl-[E1 ubiquitin-activating enzyme]-L-cysteine + [acceptor protein]-L-lysine = [E1 ubiquitin-activating enzyme]-L-cysteine + N(6)-monoubiquitinyl-[acceptor protein]-L-lysine.. It participates in protein modification; protein ubiquitination. Its activity is regulated as follows. inhibited by phenylarsine oxide (PAO). In terms of biological role, E2/E3 hybrid ubiquitin-protein ligase that displays both E2 and E3 ligase activities and mediates monoubiquitination of target proteins. Negatively regulates TRAF6-mediated NF-kappa-B activation independently of its E2 activity. Acts as a positive regulator of BMP7 signaling by mediating monoubiquitination of SMAD6, thereby regulating adipogenesis. Mediates monoubiquitination at different sites of the nuclear localization signal (NLS) of BAP1, leading to cytoplasmic retention of BAP1. Also able to monoubiquitinate the NLS of other chromatin-associated proteins, such as INO80 and CXXC1, affecting their subcellular location. Acts as a regulator of retrograde transport by assisting the TRIM27:MAGEL2 E3 ubiquitin ligase complex to mediate 'Lys-63'-linked ubiquitination of WASHC1, leading to promote endosomal F-actin assembly. In Homo sapiens (Human), this protein is (E3-independent) E2 ubiquitin-conjugating enzyme (UBE2O).